Here is a 196-residue protein sequence, read N- to C-terminus: GTP cyclohydrolase 1 (196 aa).

Zn(2+) contacts are provided by Cys-84, His-87, and Cys-157.

The protein belongs to the GTP cyclohydrolase I family. As to quaternary structure, toroid-shaped homodecamer, composed of two pentamers of five dimers.

The catalysed reaction is GTP + H2O = 7,8-dihydroneopterin 3'-triphosphate + formate + H(+). The protein operates within cofactor biosynthesis; 7,8-dihydroneopterin triphosphate biosynthesis; 7,8-dihydroneopterin triphosphate from GTP: step 1/1. The polypeptide is GTP cyclohydrolase 1 (Corynebacterium glutamicum (strain ATCC 13032 / DSM 20300 / JCM 1318 / BCRC 11384 / CCUG 27702 / LMG 3730 / NBRC 12168 / NCIMB 10025 / NRRL B-2784 / 534)).